Consider the following 513-residue polypeptide: Histidine ammonia-lyase (513 aa).

Positions 146–148 form a cross-link, 5-imidazolinone (Ala-Gly); sequence ASG. Ser147 is modified (2,3-didehydroalanine (Ser)).

This sequence belongs to the PAL/histidase family. Contains an active site 4-methylidene-imidazol-5-one (MIO), which is formed autocatalytically by cyclization and dehydration of residues Ala-Ser-Gly.

It localises to the cytoplasm. The enzyme catalyses L-histidine = trans-urocanate + NH4(+). It participates in amino-acid degradation; L-histidine degradation into L-glutamate; N-formimidoyl-L-glutamate from L-histidine: step 1/3. The protein is Histidine ammonia-lyase of Shewanella oneidensis (strain ATCC 700550 / JCM 31522 / CIP 106686 / LMG 19005 / NCIMB 14063 / MR-1).